The chain runs to 243 residues: Probable glycerol uptake facilitator protein (243 aa).

Helical transmembrane passes span 7 to 27 (ILLG…GVCA) and 44 to 64 (LLIA…SIQV). The short motif at 72–74 (NPA) is the NPA 1 element. The next 3 helical transmembrane spans lie at 88–108 (IGLL…AQII), 143–163 (ISYE…GDYH), and 166–186 (TGVF…GCAI). The short motif at 187-189 (NPA) is the NPA 2 element. A helical membrane pass occupies residues 221–241 (LVPLLAPIAAGLIMGGFSLLI).

It belongs to the MIP/aquaporin (TC 1.A.8) family.

The protein resides in the cell membrane. It carries out the reaction glycerol(in) = glycerol(out). Its function is as follows. Mediates glycerol diffusion across the cytoplasmic membrane via a pore-type mechanism. This Mycoplasmoides gallisepticum (strain R(low / passage 15 / clone 2)) (Mycoplasma gallisepticum) protein is Probable glycerol uptake facilitator protein (glpF).